The sequence spans 724 residues: Long-chain-fatty-acid--CoA ligase ACSBG1 (724 aa).

Residues 1–30 (MPRNSGAGYGCPHGDPSMLDSRETPQESRQ) form a disordered region. Positions 20–30 (DSRETPQESRQ) are enriched in basic and acidic residues. Residues Ser-53 and Ser-56 each carry the phosphoserine modification. Residues 282–290 (TSGTTGNPK), 472–477 (AGYGLS), Asp-550, and Arg-565 each bind ATP. Tyr-658 bears the Phosphotyrosine mark. Position 701 (Lys-701) interacts with ATP.

The protein belongs to the ATP-dependent AMP-binding enzyme family. Bubblegum subfamily. In terms of tissue distribution, expressed primarily in brain. Expressed at lower level in testis and adrenal gland. Present in all regions of brain except pituitary.

The protein resides in the cytoplasm. The protein localises to the cytoplasmic vesicle. Its subcellular location is the microsome. It localises to the endoplasmic reticulum. It is found in the cell membrane. The catalysed reaction is a long-chain fatty acid + ATP + CoA = a long-chain fatty acyl-CoA + AMP + diphosphate. The enzyme catalyses (E)-hexadec-2-enoate + ATP + CoA = (2E)-hexadecenoyl-CoA + AMP + diphosphate. It catalyses the reaction hexadecanoate + ATP + CoA = hexadecanoyl-CoA + AMP + diphosphate. In terms of biological role, catalyzes the conversion of fatty acids such as long-chain and very long-chain fatty acids to their active form acyl-CoAs for both synthesis of cellular lipids, and degradation via beta-oxidation. Can activate diverse saturated, monosaturated and polyunsaturated fatty acids. The sequence is that of Long-chain-fatty-acid--CoA ligase ACSBG1 from Homo sapiens (Human).